The sequence spans 209 residues: Putative 3-methyladenine DNA glycosylase (209 aa).

This sequence belongs to the DNA glycosylase MPG family.

The chain is Putative 3-methyladenine DNA glycosylase from Deinococcus geothermalis (strain DSM 11300 / CIP 105573 / AG-3a).